We begin with the raw amino-acid sequence, 359 residues long: RNA 3'-terminal phosphate cyclase (359 aa).

Residues Gln100 and 291–294 (HASD) contribute to the ATP site. Catalysis depends on His317, which acts as the Tele-AMP-histidine intermediate.

The protein belongs to the RNA 3'-terminal cyclase family. Type 1 subfamily.

Its subcellular location is the cytoplasm. The catalysed reaction is a 3'-end 3'-phospho-ribonucleotide-RNA + ATP = a 3'-end 2',3'-cyclophospho-ribonucleotide-RNA + AMP + diphosphate. Catalyzes the conversion of 3'-phosphate to a 2',3'-cyclic phosphodiester at the end of RNA. The mechanism of action of the enzyme occurs in 3 steps: (A) adenylation of the enzyme by ATP; (B) transfer of adenylate to an RNA-N3'P to produce RNA-N3'PP5'A; (C) and attack of the adjacent 2'-hydroxyl on the 3'-phosphorus in the diester linkage to produce the cyclic end product. The biological role of this enzyme is unknown but it is likely to function in some aspects of cellular RNA processing. The sequence is that of RNA 3'-terminal phosphate cyclase from Hyperthermus butylicus (strain DSM 5456 / JCM 9403 / PLM1-5).